The chain runs to 101 residues: MIKEIVKESEKGILIDIEVTTNAKKNEIGKINEWRKRIEIRIKEQPIEGKANKAIIKFLKGIFKSEISINSGTTSSQKTVLIPDKTKEDVVKILKKEIKSI.

This sequence belongs to the UPF0235 family.

In Methanococcus maripaludis (strain C6 / ATCC BAA-1332), this protein is UPF0235 protein MmarC6_1603.